Here is a 275-residue protein sequence, read N- to C-terminus: MDLWLREGQIEDAAMTYKIKETLVTKKTKYQELAIVDTYALGRMLVLDGIVQTTVKDEYVYHEMITHIPLFTHPNPQKVLIVGGGDGGTVREVLKHETVEKVVLCEIDEQVVYECKKYLPEISCELDNPKCEVFIGDGIKYVHQHRNEFDVIIVDSTDPFGAAEGLFGGSFYKEIYNCLTEDGIFIAQTETPFYLPEVVKQVYKDAKEIFPITRLFMAGIPTYPSGFWSFTIGSKKYDPKEVDLSSTLNINTKYYTKELHKACFVLPKFVEDLTR.

A PABS domain is found at 2-235 (DLWLREGQIE…GFWSFTIGSK (234 aa)). Gln31 contacts S-methyl-5'-thioadenosine. His62 and Asp86 together coordinate spermidine. Residues Glu106 and 137–138 (DG) each bind S-methyl-5'-thioadenosine. Asp155 serves as the catalytic Proton acceptor. Position 155–158 (155–158 (DSTD)) interacts with spermidine.

It belongs to the spermidine/spermine synthase family. In terms of assembly, homodimer or homotetramer.

The protein localises to the cytoplasm. The enzyme catalyses S-adenosyl 3-(methylsulfanyl)propylamine + putrescine = S-methyl-5'-thioadenosine + spermidine + H(+). The protein operates within amine and polyamine biosynthesis; spermidine biosynthesis; spermidine from putrescine: step 1/1. Functionally, catalyzes the irreversible transfer of a propylamine group from the amino donor S-adenosylmethioninamine (decarboxy-AdoMet) to putrescine (1,4-diaminobutane) to yield spermidine. The polypeptide is Polyamine aminopropyltransferase (Clostridium kluyveri (strain NBRC 12016)).